The following is a 713-amino-acid chain: Polyribonucleotide nucleotidyltransferase (713 aa).

Mg(2+) contacts are provided by D488 and D494. The KH domain maps to 555–614 (PRIEVMNIPTDKIRDVIGSGGKVIREIVEKTGAKINIEDDGTVKIASSNGKEIEAAKKWI). The region spanning 624-692 (GEIYEGTVVK…ERGKVRLSMK (69 aa)) is the S1 motif domain.

Belongs to the polyribonucleotide nucleotidyltransferase family. It depends on Mg(2+) as a cofactor.

It localises to the cytoplasm. The enzyme catalyses RNA(n+1) + phosphate = RNA(n) + a ribonucleoside 5'-diphosphate. Its function is as follows. Involved in mRNA degradation. Catalyzes the phosphorolysis of single-stranded polyribonucleotides processively in the 3'- to 5'-direction. This chain is Polyribonucleotide nucleotidyltransferase, found in Brucella anthropi (strain ATCC 49188 / DSM 6882 / CCUG 24695 / JCM 21032 / LMG 3331 / NBRC 15819 / NCTC 12168 / Alc 37) (Ochrobactrum anthropi).